Here is a 377-residue protein sequence, read N- to C-terminus: Alanine racemase (377 aa).

The active-site Proton acceptor; specific for D-alanine is the Lys-35. An N6-(pyridoxal phosphate)lysine modification is found at Lys-35. Arg-130 provides a ligand contact to substrate. Catalysis depends on Tyr-260, which acts as the Proton acceptor; specific for L-alanine. Met-312 is a binding site for substrate.

The protein belongs to the alanine racemase family. Requires pyridoxal 5'-phosphate as cofactor.

The catalysed reaction is L-alanine = D-alanine. The protein operates within amino-acid biosynthesis; D-alanine biosynthesis; D-alanine from L-alanine: step 1/1. Catalyzes the interconversion of L-alanine and D-alanine. May also act on other amino acids. The chain is Alanine racemase (alr) from Leptothrix cholodnii (strain ATCC 51168 / LMG 8142 / SP-6) (Leptothrix discophora (strain SP-6)).